Consider the following 185-residue polypeptide: Elongation factor P (185 aa).

The protein belongs to the elongation factor P family.

The protein resides in the cytoplasm. The protein operates within protein biosynthesis; polypeptide chain elongation. In terms of biological role, involved in peptide bond synthesis. Stimulates efficient translation and peptide-bond synthesis on native or reconstituted 70S ribosomes in vitro. Probably functions indirectly by altering the affinity of the ribosome for aminoacyl-tRNA, thus increasing their reactivity as acceptors for peptidyl transferase. The protein is Elongation factor P of Geobacillus kaustophilus (strain HTA426).